A 238-amino-acid polypeptide reads, in one-letter code: 1-(5-phosphoribosyl)-5-[(5-phosphoribosylamino)methylideneamino] imidazole-4-carboxamide isomerase (238 aa).

Asp7 (proton acceptor) is an active-site residue. Catalysis depends on Asp129, which acts as the Proton donor.

It belongs to the HisA/HisF family.

The protein localises to the cytoplasm. The catalysed reaction is 1-(5-phospho-beta-D-ribosyl)-5-[(5-phospho-beta-D-ribosylamino)methylideneamino]imidazole-4-carboxamide = 5-[(5-phospho-1-deoxy-D-ribulos-1-ylimino)methylamino]-1-(5-phospho-beta-D-ribosyl)imidazole-4-carboxamide. The protein operates within amino-acid biosynthesis; L-histidine biosynthesis; L-histidine from 5-phospho-alpha-D-ribose 1-diphosphate: step 4/9. In Leuconostoc mesenteroides subsp. mesenteroides (strain ATCC 8293 / DSM 20343 / BCRC 11652 / CCM 1803 / JCM 6124 / NCDO 523 / NBRC 100496 / NCIMB 8023 / NCTC 12954 / NRRL B-1118 / 37Y), this protein is 1-(5-phosphoribosyl)-5-[(5-phosphoribosylamino)methylideneamino] imidazole-4-carboxamide isomerase.